Here is a 1849-residue protein sequence, read N- to C-terminus: Mitogen-activated protein kinase kinase kinase mkh1 (1849 aa).

Residues 1556-1825 (WFKGQLIGKG…TKLLAEHPFC (270 aa)) form the Protein kinase domain. Residues 1562 to 1570 (IGKGTYGRV) and Lys1585 contribute to the ATP site. The active-site Proton acceptor is the Asp1686.

The protein belongs to the protein kinase superfamily. STE Ser/Thr protein kinase family. MAP kinase kinase kinase subfamily.

It carries out the reaction L-seryl-[protein] + ATP = O-phospho-L-seryl-[protein] + ADP + H(+). It catalyses the reaction L-threonyl-[protein] + ATP = O-phospho-L-threonyl-[protein] + ADP + H(+). In terms of biological role, mitogen-activated protein kinase kinase kinase, part of the mkh1-mkk1-spm1 MAPK cascade that regulates vegetative growth, conidial formation, colony surface hydrophobicity, osmotic stress, cell wall integrity maintenance, carbon and nitrogen source utilization, chitin distribution, septa formation, and pathogenicity. In Cytospora mali (Apple Valsa canker fungus), this protein is Mitogen-activated protein kinase kinase kinase mkh1.